Reading from the N-terminus, the 968-residue chain is Protein translocase subunit SecA (968 aa).

Residues Gln99, 117 to 121, and Asp631 each bind ATP; that span reads GEGKT.

It belongs to the SecA family. Monomer and homodimer. Part of the essential Sec protein translocation apparatus which comprises SecA, SecYEG and auxiliary proteins SecDF. Other proteins may also be involved.

Its subcellular location is the cell inner membrane. It is found in the cytoplasm. It carries out the reaction ATP + H2O + cellular proteinSide 1 = ADP + phosphate + cellular proteinSide 2.. Functionally, part of the Sec protein translocase complex. Interacts with the SecYEG preprotein conducting channel. Has a central role in coupling the hydrolysis of ATP to the transfer of proteins into and across the cell membrane, serving as an ATP-driven molecular motor driving the stepwise translocation of polypeptide chains across the membrane. In Chlamydia muridarum (strain MoPn / Nigg), this protein is Protein translocase subunit SecA.